The chain runs to 202 residues: uncharacterized protein (202 aa).

Positions 118–202 are disordered; that stretch reads SSVSPVSSKK…KVSGTKKVKA (85 aa). S121 carries the phosphoserine modification. Basic residues-rich tracts occupy residues 142 to 163 and 186 to 202; these read EKSK…KSKR and SSKS…KVKA.

It localises to the nucleus. The protein localises to the nucleolus. This is an uncharacterized protein from Schizosaccharomyces pombe (strain 972 / ATCC 24843) (Fission yeast).